Consider the following 424-residue polypeptide: Hydrolase ORFZ (424 aa).

Residue Ser243 is the Nucleophile of the active site.

It belongs to the AB hydrolase superfamily. FUS2 hydrolase family. In terms of assembly, homodimer.

It functions in the pathway secondary metabolite biosynthesis. Functionally, hydrolyase; part of the gene cluster that mediates the biosynthesis of a tyrosine-derived cytochalasan acting as a fungal signal recognized by resistant rice plants and leads to avirulence in Pi33 resistant rice cultivars. The first step in the pathway is catalyzed by the hybrid PKS-NRPS ACE1, assisted by the enoyl reductase RAP1, that are responsible for fusion of the tyrosine precursor and the polyketide backbone. The polyketide synthase module (PKS) of ACE1 is responsible for the synthesis of the polyketide backbone and the downstream nonribosomal peptide synthetase (NRPS) amidates the carboxyl end of the polyketide with the tyrosine precursor. Because ACE1 lacks a designated enoylreductase (ER) domain, the required activity is provided the enoyl reductase RAP1. Reduction by the hydrolyase ORFZ, followed by dehydration and intra-molecular Diels-Alder cyclization by the Diels-Alderase ORF3 then yield the required isoindolone-fused macrocycle. A number of oxidative steps catalyzed by the tailoring enzymes identified within the cluster, including cytochrome P450 monooxygenases CYP1 to CYP4, the FAD-linked oxidoreductase OXR2 and the short-chain dehydrogenase/reductase OXR1, are further required to afford the final cytochalasans that confer avirulence and which have still to be identified. The monooxygenase CYP1 has been shown to be a site-selective C-18 hydroxylase whereas the function of CYP3 is the site-selective epoxidation of the C-6/C-7 olefin that is present in some intermediate compounds. Finally, SYN2 and RAP2 are not required for avirulence in Pi33 resistant rice cultivars. This chain is Hydrolase ORFZ, found in Pyricularia oryzae (strain 70-15 / ATCC MYA-4617 / FGSC 8958) (Rice blast fungus).